The sequence spans 249 residues: Type I iodothyronine deiodinase (249 aa).

The Extracellular portion of the chain corresponds to 1–12 (MGLPQPGLWLKR). A helical; Signal-anchor for type III membrane protein membrane pass occupies residues 13–33 (LWVLLEVAVHVVVGKVLLILF). The Cytoplasmic portion of the chain corresponds to 34–249 (PDRVKRNILA…VRAVLEKLHS (216 aa)). The active site involves selenocysteine 126. Selenocysteine 126 is a non-standard amino acid (selenocysteine).

Belongs to the iodothyronine deiodinase family. Predominantly monomer. Can form homodimers but homodimerization is not essential for enzyme activity.

It is found in the cell membrane. The protein resides in the endoplasmic reticulum membrane. The protein localises to the basolateral cell membrane. It carries out the reaction 3,3',5-triiodo-L-thyronine + iodide + A + H(+) = L-thyroxine + AH2. The enzyme catalyses 3,3',5'-triiodo-L-thyronine + iodide + A + H(+) = L-thyroxine + AH2. It catalyses the reaction 3,3'-diiodo-L-thyronine + iodide + A + H(+) = 3,3',5'-triiodo-L-thyronine + AH2. The catalysed reaction is 3,3'-diiodo-L-thyronine + iodide + A + H(+) = 3,3',5-triiodo-L-thyronine + AH2. It carries out the reaction 3'-iodo-L-thyronine + iodide + A + H(+) = 3',5'-diiodo-L-thyronine + AH2. The enzyme catalyses 3-iodo-L-thyronine + iodide + A + H(+) = 3,5-diiodo-L-thyronine + AH2. It catalyses the reaction 3-iodo-L-thyronine + iodide + A + H(+) = 3,3'-diiodo-L-thyronine + AH2. The catalysed reaction is 3,3'-diiodothyronamine + iodide + A + H(+) = 3,3',5'-triiodothyronamine + AH2. It carries out the reaction 3'-iodothyronamine + iodide + A + H(+) = 3',5'-diiodothyronamine + AH2. The enzyme catalyses 3-iodothyronamine + iodide + A + H(+) = 3,3'-diiodothyronamine + AH2. It catalyses the reaction 3,3'-diiodothyronamine + iodide + A + H(+) = 3,3',5-triiodothyronamine + AH2. The catalysed reaction is 3-iodothyronamine + iodide + A + H(+) = 3,5-diiodothyronamine + AH2. It carries out the reaction 3,3'-diiodo-L-thyronine sulfate + iodide + A + H(+) = 3,3',5'-triiodo-L-thyronine sulfate + AH2. The enzyme catalyses 3,3',5'-triiodo-L-thyronine sulfate + iodide + A + H(+) = L-thyroxine sulfate + AH2. It catalyses the reaction 3,3'-diiodo-L-thyronine sulfate + iodide + A + H(+) = 3,3',5-triiodo-L-thyronine sulfate + AH2. Deiodination of substrates 3,3',5'-triiodothyronine, 3,3',5'-triiodothyronamine and 3',5'- diiodothyronamine are inhibited by 6n-propyl-2-thiouracil (PTU). Functionally, plays a crucial role in the metabolism of thyroid hormones (TH) and has specific roles in TH activation and inactivation by deiodination. Catalyzes the deiodination of L-thyroxine (T4) to 3,5,3'-triiodothyronine (T3), 3,3',5'-triiodothyronine (rT3) to 3,3'-diiodothyronine (3,3'-T2) and 3',5'-diiodothyronine (3',5'-T2) to 3'-monoiodothyronine (3'-T1) via outer-ring deiodination (ORD). Catalyzes the deiodination of T4 to 3,3',5'-triiodothyronine (rT3) via inner-ring deiodination (IRD). Catalyzes the deiodination of T3 to 3,3'-T2, 3,5-diiodothyronine (3,5-T2) to 3- monoiodothyronine (3-T1) and 3,3'-T2 to 3-T1 via IRD. Catalyzes the phenolic ring deiodinations of 3,3',5'-triiodothyronamine and 3',5'-diiodothyronamine. Catalyzes the phenolic ring deiodination of 3,3'-diiodothyronamine and tyrosyl ring deiodinations of 3,5,3'-triiodothyronamine and 3,5-diiodothyronamine. Catalyzes the deiodination of L-thyroxine sulfate and 3,3',5-triiodo-L-thyronine sulfate via IRD and of 3,3',5'-triiodo-L-thyronine sulfate via ORD. In Homo sapiens (Human), this protein is Type I iodothyronine deiodinase (DIO1).